A 195-amino-acid polypeptide reads, in one-letter code: Cytochrome c oxidase assembly protein CtaG (195 aa).

The Cytoplasmic segment spans residues Met-1 to Thr-9. A helical; Signal-anchor for type II membrane protein membrane pass occupies residues Val-10–Phe-30. Residues Tyr-31 to Asn-195 lie on the Periplasmic side of the membrane.

It belongs to the COX11/CtaG family.

The protein localises to the cell inner membrane. Exerts its effect at some terminal stage of cytochrome c oxidase synthesis, probably by being involved in the insertion of the copper B into subunit I. The sequence is that of Cytochrome c oxidase assembly protein CtaG from Ruegeria sp. (strain TM1040) (Silicibacter sp.).